We begin with the raw amino-acid sequence, 763 residues long: Phosphoglycerol transferase I (763 aa).

A run of 4 helical transmembrane segments spans residues 4–19 (LLSF…IYAW), 26–48 (WWFA…LFAS), 76–98 (YILP…GWIL), and 105–127 (PHHF…ASPA).

The protein belongs to the OpgB family.

It is found in the cell inner membrane. The enzyme catalyses a phosphatidylglycerol + a membrane-derived-oligosaccharide D-glucose = a 1,2-diacyl-sn-glycerol + a membrane-derived-oligosaccharide 6-(glycerophospho)-D-glucose.. It functions in the pathway glycan metabolism; osmoregulated periplasmic glucan (OPG) biosynthesis. Its function is as follows. Transfers a phosphoglycerol residue from phosphatidylglycerol to the membrane-bound nascent glucan backbones. The protein is Phosphoglycerol transferase I of Shigella flexneri.